A 223-amino-acid polypeptide reads, in one-letter code: Peptidyl-tRNA hydrolase (223 aa).

Tyrosine 14 provides a ligand contact to tRNA. The active-site Proton acceptor is the histidine 19. Residues tyrosine 64, asparagine 66, and asparagine 112 each coordinate tRNA. The interval 183 to 223 (MNVRNTRPKPGKRQKGEGDGSTDPAPAAKEGKGPLPPTQKP) is disordered.

It belongs to the PTH family. As to quaternary structure, monomer.

It is found in the cytoplasm. It carries out the reaction an N-acyl-L-alpha-aminoacyl-tRNA + H2O = an N-acyl-L-amino acid + a tRNA + H(+). Its function is as follows. Hydrolyzes ribosome-free peptidyl-tRNAs (with 1 or more amino acids incorporated), which drop off the ribosome during protein synthesis, or as a result of ribosome stalling. Catalyzes the release of premature peptidyl moieties from peptidyl-tRNA molecules trapped in stalled 50S ribosomal subunits, and thus maintains levels of free tRNAs and 50S ribosomes. This Sorangium cellulosum (strain So ce56) (Polyangium cellulosum (strain So ce56)) protein is Peptidyl-tRNA hydrolase.